The following is a 372-amino-acid chain: Chaperone protein DnaJ (372 aa).

Residues 5-69 (DYYEVLGVSK…DKRKQYDQFG (65 aa)) form the J domain. The CR-type zinc-finger motif lies at 139 to 221 (GVDKIIELDL…CKGKGKYLER (83 aa)). Residues cysteine 152, cysteine 155, cysteine 169, cysteine 172, cysteine 195, cysteine 198, cysteine 209, and cysteine 212 each coordinate Zn(2+). 4 CXXCXGXG motif repeats span residues 152–159 (CSVCFGSG), 169–176 (CNNCHGTG), 195–202 (CNVCNGAG), and 209–216 (CKNCKGKG).

Belongs to the DnaJ family. Homodimer. The cofactor is Zn(2+).

The protein resides in the cytoplasm. In terms of biological role, participates actively in the response to hyperosmotic and heat shock by preventing the aggregation of stress-denatured proteins and by disaggregating proteins, also in an autonomous, DnaK-independent fashion. Unfolded proteins bind initially to DnaJ; upon interaction with the DnaJ-bound protein, DnaK hydrolyzes its bound ATP, resulting in the formation of a stable complex. GrpE releases ADP from DnaK; ATP binding to DnaK triggers the release of the substrate protein, thus completing the reaction cycle. Several rounds of ATP-dependent interactions between DnaJ, DnaK and GrpE are required for fully efficient folding. Also involved, together with DnaK and GrpE, in the DNA replication of plasmids through activation of initiation proteins. The chain is Chaperone protein DnaJ from Mycoplasma mycoides subsp. mycoides SC (strain CCUG 32753 / NCTC 10114 / PG1).